Reading from the N-terminus, the 709-residue chain is SH3 domain-containing kinase-binding protein 1 (709 aa).

2 consecutive SH3 domains span residues 1–58 (MVEA…EIKK) and 98–157 (RRRR…ELSG). Phosphoserine is present on residues serine 156, serine 159, serine 227, and serine 274. Positions 221-239 (ETTGSESDGGDSSSTKSEG) are enriched in low complexity. Residues 221 to 242 (ETTGSESDGGDSSSTKSEGANG) are disordered. Disordered regions lie at residues 289-309 (GKKL…MDSR), 372-485 (SDFD…KIDL), and 511-650 (DSVI…VSSQ). Threonine 298 carries the post-translational modification Phosphothreonine. Residues 311-372 (KTKDYCKVIF…PDNFVKLLPS (62 aa)) enclose the SH3 3 domain. The span at 399-434 (TERKHEIKKIPPERPETLPNRTEEKERPEREPKLDL) shows a compositional bias: basic and acidic residues. Phosphoserine is present on serine 480. Polar residues predominate over residues 513–528 (VISSTEKLSHPTTSRP). The segment covering 535-554 (PPSQSLTSSSLSSPDIFDSP) has biased composition (low complexity). Residues serine 553, serine 555, and serine 565 each carry the phosphoserine modification. The segment covering 561 to 575 (EEHISLAHRGIDVSK) has biased composition (basic and acidic residues). Residues 579–592 (KTVTISQVSDNKTS) are compositionally biased toward polar residues. Positions 600 to 623 (MAAASSGPASLSSVASSPMSSSLG) are enriched in low complexity. Residues 627 to 636 (QRASSPSLFS) are compositionally biased toward polar residues. Serine 631 is subject to Phosphoserine. The stretch at 646–708 (AVSSQAAIEE…VNDIKKALQS (63 aa)) forms a coiled coil.

Can self-associate and form homotetramers. Interacts with CD2, F-actin capping protein, PIK3R3, GRB2, EGFR, MET, BLNK, MAP3K4, PDCD6IP, SPRY2, ARHGAP17, ARHGAP27, CRK, BCAR1, SOS1, ASAP1, ARAP3, HIP1R, SYNJ2, INPP5D and STAP1. Interacts with E3 ubiquitin-protein ligase CBL. Interacts with CBLB, but does not interact with CBLC. Two molecules of SH3KBP1 seem to bind through their respective SH3 1 domain to one molecule of CBLB. The interaction with CBL or CBLB and EGFR is increased upon EGF stimulation. The interaction with CBL is attenuated by PDCD6IP. Interacts (via SH3 domains) with ARAP1. The interaction is independent of EGF and does not affect ARAP1 GTPase-activating activity but is involved in regulating ubiquitination and endocytic trafficking of EGFR. ARAP1 competes with CBL for binding to SH3KBP1 and prevents interaction of CBL with SH3KBP1; this is likely to regulate SH3KBP1-mediated internalization of EGFR. Interacts through its proline-rich region with the SH3 domain of endophilins SH3GL1, SH3GL2 and SH3GL3. The SH3KBP1-endophilin complex seems to associate with a complex containing the phosphorylated receptor (EGFR or MET) and phosphorylated CBL. Probably associates with ASAP1 and phosphorylated EGFR. Probably part of a complex consisting of at least SH3KBP1, ASAP1 and ARAP3. Interacts with focal adhesion kinases PTK2/FAK1 and PTK2B/PYK2, probably as a dimer. Interacts with DAB2 and probably associates with chathrin through its interaction with DAB2. Part of a complex consisting of SH3KBP1, DAB2, and clathrin heavy chain. DAB2 and clathrin dissociate from SH3KBP1 following growth factor treatment, enabling interaction with CBL. Interacts with DDN and probably associates with MAGI2 through its interaction with DDN. Interacts with the SH3 domains of SRC tyrosine-protein kinases SRC, LCK, LYN, FGR, FYN and HCK. Interacts with TRADD, BIRC2, TRAF1, TRAF2 and TNFR1, and the association with a TNFR1-associated complex upon stimulation with TNF-alpha seems to be mediated by SRC. Probably part of a complex consisting of at least SH3KBP1, ASAP1 and ARAP3. Interacts (via SH3 domains) with SHKBP1 (via PXXXPR motifs). Interacts with ATX2. Interaction with CBL is abolished in the presence of SHKBP1. Interacts (via SH3 domains) with ZFP36 (via extreme C-terminal region). Interacts with MAP3K4; this interaction enhances the association with ZFP36. Monoubiquitinated by CBL and CBLB after EGF stimulation; probably on its C-terminus.

It is found in the cytoplasm. The protein resides in the cytoskeleton. Its subcellular location is the cytoplasmic vesicle membrane. It localises to the synapse. The protein localises to the synaptosome. It is found in the cell junction. The protein resides in the focal adhesion. Its function is as follows. Adapter protein involved in regulating diverse signal transduction pathways. Involved in the regulation of endocytosis and lysosomal degradation of ligand-induced receptor tyrosine kinases, including EGFR and MET/hepatocyte growth factor receptor, through an association with CBL and endophilins. The association with CBL, and thus the receptor internalization, may be inhibited by an interaction with PDCD6IP and/or SPRY2. Involved in regulation of ligand-dependent endocytosis of the IgE receptor. Attenuates phosphatidylinositol 3-kinase activity by interaction with its regulatory subunit. May be involved in regulation of cell adhesion; promotes the interaction between TTK2B and PDCD6IP. May be involved in the regulation of cellular stress response via the MAPK pathways through its interaction with MAP3K4. Is involved in modulation of tumor necrosis factor mediated apoptosis. Plays a role in the regulation of cell morphology and cytoskeletal organization. Required in the control of cell shape and migration. Has an essential role in the stimulation of B cell activation. The protein is SH3 domain-containing kinase-binding protein 1 (Sh3kbp1) of Mus musculus (Mouse).